Reading from the N-terminus, the 476-residue chain is Growth arrest-specific protein 7 (476 aa).

The SH3 domain occupies 1–62 (MSGARCRTLY…PASYVQLLEK (62 aa)). Residues 77-110 (VILPPGWQSYLSPQGRRYYVNTTTNETTWERPSS) form the WW domain. The interval 100–171 (TNETTWERPS…SSPSKKQSKE (72 aa)) is disordered. The span at 108 to 120 (PSSSPGIPASPGS) shows a compositional bias: low complexity. 2 positions are modified to phosphoserine: Ser-117 and Ser-163. Over residues 150–171 (RKSTGDSQNLGSSSPSKKQSKE) the composition is skewed to polar residues. The 261-residue stretch at 196-456 (TEWSYCDYFW…LLRKVDPAKD (261 aa)) folds into the F-BAR domain. The stretch at 309-419 (ENFKKDMKKC…RLEVERVEMI (111 aa)) forms a coiled coil.

It is found in the cytoplasm. In terms of biological role, may play a role in promoting maturation and morphological differentiation of cerebellar neurons. The chain is Growth arrest-specific protein 7 (GAS7) from Homo sapiens (Human).